Here is a 75-residue protein sequence, read N- to C-terminus: M-myrmeciitoxin-Mp2a (75 aa).

The N-terminal stretch at 1–26 (MKLSCLLLTLAIIFVLTIVHAPNVEA) is a signal peptide. The propeptide occupies 27 to 48 (KALADPESDAVGFADAVGEADP). L74 carries the leucine amide modification.

The protein belongs to the formicidae venom precursor-01 superfamily. Ant pilosulin family. As to quaternary structure, heterodimer with M-MIITX-Mp2b (pilosin-3b) (AC P0C023); disulfide-linked. Only heterodimers (and not monomers) have been identified in the venom. In terms of tissue distribution, expressed by the venom gland.

The protein localises to the secreted. Heterodimer protein that may serve both defensive (pain-inducing) and predatory (insecticidal) roles. Has membrane-disrupting activity and shows induction of non-specific calcium influx into cells,. Shows broad-spectrum activity against a diverse range of bacteria, and cell lines, as well as hemolytic activity (EC(50)=2.18 uM). In vivo, shows moderate insecticidal activity against D.melanogaster and potent anthelmintic activity against the veterinary nematode H.contortus. In addition, intraplantar injection into mice induces nocifensive behavior and mechanical allodynia. The protein is M-myrmeciitoxin-Mp2a of Myrmecia pilosula (Jack jumper ant).